The chain runs to 1216 residues: DNA polymerase subunit gamma-1 (1216 aa).

Low complexity predominate over residues 27-37 (SSSVLDPVPSD). Residues 27–50 (SSSVLDPVPSDGQPQSQMPSSENG) are disordered. Positions 38–50 (GQPQSQMPSSENG) are enriched in polar residues. An Exo I motif is present at residues 179–183 (VFDVE). The active-site Exonuclease activity is the Asp181. The Exo II signature appears at 250 to 258 (VGHNVSFDR). Ser289 contributes to the DNA binding site. A compositionally biased stretch (basic residues) spans 301-314 (GKHKTQHPTKRGQK). The segment at 301-321 (GKHKTQHPTKRGQKSQKNANG) is disordered. The short motif at 377-385 (YCARDVWAT) is the Exo III element. The disordered stretch occupies residues 488–518 (TASASKLPIEGAGPFGDPMDQEDPGPPSEEE). The segment at 491-552 (ASKLPIEGAG…RPQHLPGHPG (62 aa)) is accessory-interacting determinant. Acidic residues predominate over residues 506-518 (MDQEDPGPPSEEE). Arg560 contributes to the RNA binding site. Ser574 provides a ligand contact to DNA. RNA is bound by residues His731, Gly740, and Lys745. The DNA site is built by Lys783 and Thr826. Residues 835-841 (TWLTASN) are trigger loop. RNA is bound by residues Ser840 and Arg846. The short motif at 864 to 873 (VGADVDSQEL) is the Pol A element. Asp867, Val868, Ser870, Glu872, Arg920, Lys924, and Tyr928 together coordinate a 2'-deoxyribonucleoside 5'-triphosphate. Mg(2+) is bound by residues Asp867 and Val868. The Pol B motif lies at 920 to 935 (REHAKVFNYGRIYGAG). Thr1071 and Ser1072 together coordinate DNA. Positions 1111–1118 (HDEVRYLV) match the Pol C motif. Asp1112 serves as a coordination point for a 2'-deoxyribonucleoside 5'-triphosphate. A Mg(2+)-binding site is contributed by Asp1112.

Belongs to the DNA polymerase type-A family. In terms of assembly, heterotrimer composed of a catalytic subunit and a homodimer of accessory subunits (POLG:POLG2). Interacts with TTC3. Interacts with LIG3. Mg(2+) is required as a cofactor.

Its subcellular location is the mitochondrion. The protein localises to the mitochondrion matrix. It localises to the mitochondrion nucleoid. It carries out the reaction DNA(n) + a 2'-deoxyribonucleoside 5'-triphosphate = DNA(n+1) + diphosphate. It catalyses the reaction a 3'-end 2'-deoxyribonucleotidyl-deoxyribonucleotide-DNA + H2O = a 3'-end 2'-deoxyribonucleotide-DNA + a 2'-deoxyribonucleoside 5'-phosphate + H(+). The catalysed reaction is a 5'-end 2'-deoxyribose-2'-deoxyribonucleotide-DNA = (2E,4S)-4-hydroxypenten-2-al-5-phosphate + a 5'-end 5'-phospho-2'-deoxyribonucleoside-DNA + H(+). Its activity is regulated as follows. Inhibited by dideoxynucleotides such as antiviral agent zalcitabine. Its function is as follows. Catalytic subunit of DNA polymerase gamma solely responsible for replication of mitochondrial DNA (mtDNA). Replicates both heavy and light strands of the circular mtDNA genome using a single-stranded DNA template, RNA primers and the four deoxyribonucleoside triphosphates as substrates. Has 5' -&gt; 3' polymerase activity. Functionally interacts with TWNK and SSBP1 at the replication fork to form a highly processive replisome, where TWNK unwinds the double-stranded DNA template prior to replication and SSBP1 covers the parental heavy strand to enable continuous replication of the entire mitochondrial genome. A single nucleotide incorporation cycle includes binding of the incoming nucleotide at the insertion site, a phosphodiester bond formation reaction that extends the 3'-end of the primer DNA, and translocation of the primer terminus to the post-insertion site. After completing replication of a mtDNA strand, mediates 3' -&gt; 5' exonucleolytic degradation at the nick to enable proper ligation. Highly accurate due to high nucleotide selectivity and 3' -&gt; 5' exonucleolytic proofreading. Proficiently corrects base substitutions, single-base additions and deletions in non-repetitive sequences and short repeats, but displays lower proofreading activity when replicating longer homopolymeric stretches. Exerts exonuclease activity toward single-stranded DNA and double-stranded DNA containing 3'-terminal mispairs. When a misincorporation occurs, transitions from replication to a pro-nucleolytic editing mode and removes the missincorporated nucleoside in the exonuclease active site. Proceeds via an SN2 nucleolytic mechanism in which Asp-198 catalyzes phosphodiester bond hydrolysis and Glu-200 stabilizes the leaving group. As a result the primer strand becomes one nucleotide shorter and is positioned in the post-insertion site, ready to resume DNA synthesis. Exerts 5'-deoxyribose phosphate (dRP) lyase activity and mediates repair-associated mtDNA synthesis (gap filling) in base-excision repair pathway. Catalyzes the release of the 5'-terminal 2-deoxyribose-5-phosphate sugar moiety from incised apurinic/apyrimidinic (AP) sites to produce a substrate for DNA ligase. The dRP lyase reaction does not require divalent metal ions and likely proceeds via a Schiff base intermediate in a beta-elimination reaction mechanism. The chain is DNA polymerase subunit gamma-1 from Rattus norvegicus (Rat).